Here is a 476-residue protein sequence, read N- to C-terminus: mRNA cap guanine-N(7) methyltransferase (476 aa).

Residues 1 to 14 (MANSAKAEEYEKMS) are compositionally biased toward basic and acidic residues. Positions 1–146 (MANSAKAEEY…KQKNLEEGHS (146 aa)) are disordered. Residues 20-50 (ASVNSETESSFNINENTTASGTGLSEKTSVC) show a composition bias toward polar residues. 3 positions are modified to phosphoserine: Ser24, Ser28, and Ser29. Basic and acidic residues-rich tracts occupy residues 54 to 68 (DIAR…DLVK) and 84 to 118 (LDPE…DKSS). Ser118 carries the phosphoserine modification. Residues 126–128 (KRK) carry the Nuclear localization signal motif. Basic and acidic residues predominate over residues 129-145 (IALEDVPEKQKNLEEGH). An mRNA cap 0 methyltransferase domain is found at 167 to 475 (SRIFYLRNFN…IYLVFAFEKQ (309 aa)). 176-177 (NN) contacts mRNA. 6 residues coordinate S-adenosyl-L-methionine: Lys180, Gly205, Asp227, Asp261, Gln284, and Tyr289.

This sequence belongs to the class I-like SAM-binding methyltransferase superfamily. mRNA cap 0 methyltransferase family. As to quaternary structure, interacts with importin alpha, leading to stimulate both RNA-binding and methyltransferase activity. Interaction with importin alpha and beta is required for its nuclear localization, importin beta dissociating in response to RanGTP, allowing RNMT-importin alpha to bind RNA substrates. Interacts with elongating form of polymerase II and RNGTT. Interacts with RAMAC, this interaction significantly enhances RNA-binding and cap methyltransferase activity. As to expression, widely expressed.

It is found in the nucleus. It carries out the reaction a 5'-end (5'-triphosphoguanosine)-ribonucleoside in mRNA + S-adenosyl-L-methionine = a 5'-end (N(7)-methyl 5'-triphosphoguanosine)-ribonucleoside in mRNA + S-adenosyl-L-homocysteine. Methyltransferase activity is activated by RAMAC. Catalytic subunit of the mRNA-capping methyltransferase RNMT:RAMAC complex that methylates the N7 position of the added guanosine to the 5'-cap structure of mRNAs. Binds RNA containing 5'-terminal GpppC. This Homo sapiens (Human) protein is mRNA cap guanine-N(7) methyltransferase (RNMT).